A 167-amino-acid chain; its full sequence is Large ribosomal subunit protein bL9 (167 aa).

This sequence belongs to the bacterial ribosomal protein bL9 family.

In terms of biological role, binds to the 23S rRNA. The protein is Large ribosomal subunit protein bL9 of Chlamydia trachomatis serovar L2 (strain ATCC VR-902B / DSM 19102 / 434/Bu).